We begin with the raw amino-acid sequence, 366 residues long: Chorismate synthase (366 aa).

Residues arginine 48 and arginine 54 each coordinate NADP(+). FMN contacts are provided by residues 125–127, 238–239, glycine 278, 293–297, and arginine 319; these read RSS, NA, and KPTSS.

It belongs to the chorismate synthase family. Homotetramer. The cofactor is FMNH2.

The enzyme catalyses 5-O-(1-carboxyvinyl)-3-phosphoshikimate = chorismate + phosphate. It functions in the pathway metabolic intermediate biosynthesis; chorismate biosynthesis; chorismate from D-erythrose 4-phosphate and phosphoenolpyruvate: step 7/7. In terms of biological role, catalyzes the anti-1,4-elimination of the C-3 phosphate and the C-6 proR hydrogen from 5-enolpyruvylshikimate-3-phosphate (EPSP) to yield chorismate, which is the branch point compound that serves as the starting substrate for the three terminal pathways of aromatic amino acid biosynthesis. This reaction introduces a second double bond into the aromatic ring system. The polypeptide is Chorismate synthase (Burkholderia ambifaria (strain ATCC BAA-244 / DSM 16087 / CCUG 44356 / LMG 19182 / AMMD) (Burkholderia cepacia (strain AMMD))).